The following is a 121-amino-acid chain: Small ribosomal subunit protein uS13 (121 aa).

The segment at 93–121 (RGLPMRGQRTRTNARTRKGPRKSAAALKK) is disordered.

It belongs to the universal ribosomal protein uS13 family. Part of the 30S ribosomal subunit. Forms a loose heterodimer with protein S19. Forms two bridges to the 50S subunit in the 70S ribosome.

Its function is as follows. Located at the top of the head of the 30S subunit, it contacts several helices of the 16S rRNA. In the 70S ribosome it contacts the 23S rRNA (bridge B1a) and protein L5 of the 50S subunit (bridge B1b), connecting the 2 subunits; these bridges are implicated in subunit movement. Contacts the tRNAs in the A and P-sites. This Methylibium petroleiphilum (strain ATCC BAA-1232 / LMG 22953 / PM1) protein is Small ribosomal subunit protein uS13.